Here is a 199-residue protein sequence, read N- to C-terminus: dITP/XTP pyrophosphatase (199 aa).

Position 8–13 (8–13 (SGNAGK)) interacts with substrate. Asp-69 (proton acceptor) is an active-site residue. Asp-69 lines the Mg(2+) pocket. Substrate is bound by residues Ser-70, 154 to 157 (FGYN), Lys-177, and 182 to 183 (HR).

The protein belongs to the HAM1 NTPase family. As to quaternary structure, homodimer. Requires Mg(2+) as cofactor.

It catalyses the reaction XTP + H2O = XMP + diphosphate + H(+). The enzyme catalyses dITP + H2O = dIMP + diphosphate + H(+). It carries out the reaction ITP + H2O = IMP + diphosphate + H(+). In terms of biological role, pyrophosphatase that catalyzes the hydrolysis of nucleoside triphosphates to their monophosphate derivatives, with a high preference for the non-canonical purine nucleotides XTP (xanthosine triphosphate), dITP (deoxyinosine triphosphate) and ITP. Seems to function as a house-cleaning enzyme that removes non-canonical purine nucleotides from the nucleotide pool, thus preventing their incorporation into DNA/RNA and avoiding chromosomal lesions. The protein is dITP/XTP pyrophosphatase of Xanthomonas campestris pv. campestris (strain 8004).